The following is a 227-amino-acid chain: MKALYLGHAAVLLQTGERNILIDPFINENPSCPIKVQDLPKIHYILVTHGHGDHLGDTVEIAKRDSSTVITNFELSSLISRHGISTHPMHIGGRYTFEFGSVKLTPALHGSSISEGDTPVYAGNPCGFLIEIHDKKIYHAGDTGLTKDMELLRRENIDLAFLPIGGNFVMDLWDAVEAVKMIYPEIVVPIHYNTWEVIKSDPAIFQKEVEKLGLKCRALKPGESIEL.

This sequence belongs to the UPF0173 family.

This chain is UPF0173 metal-dependent hydrolase Tlet_1100, found in Pseudothermotoga lettingae (strain ATCC BAA-301 / DSM 14385 / NBRC 107922 / TMO) (Thermotoga lettingae).